We begin with the raw amino-acid sequence, 249 residues long: Homeobox protein TGIF2LX (249 aa).

The segment covering 1-27 (MEAAADRPAETRSRVEKDSRRAKKDSP) has biased composition (basic and acidic residues). Disordered stretches follow at residues 1-60 (MEAA…KKKR) and 121-215 (QRRG…EPVS). The segment covering 28-46 (AKTQSPAQDTSIMLRSNAD) has biased composition (polar residues). The segment at residues 55–118 (EHKKKRKGYL…INARRRILPD (64 aa)) is a DNA-binding region (homeobox; TALE-type). The span at 159 to 172 (DNVQSLPLRSSPKG) shows a compositional bias: polar residues. Low complexity predominate over residues 202–215 (VSNITSSSSPEPVS).

The protein belongs to the TALE/TGIF homeobox family.

It localises to the nucleus. May have a transcription role in testis. In Miopithecus talapoin (Angolan talapoin), this protein is Homeobox protein TGIF2LX (TGIF2LX).